A 307-amino-acid polypeptide reads, in one-letter code: Myoblast determination protein 1 homolog (307 aa).

The bHLH domain maps to 109–160 (DRRKAATLRERRRLSKVNEAFETLKRCTNTNPNQRLPKVEILRNAISYIESL). Residues 271–307 (TATSSGPPPVDGRGSPGPLQASSPRSSREPNLIYQVL) form a disordered region.

In terms of assembly, efficient DNA binding requires dimerization with another bHLH protein. In terms of tissue distribution, expressed in fast and myotomal muscle. Very weak expression in brain, skin and gonads.

Its subcellular location is the nucleus. In terms of biological role, may act as a transcriptional activator that promotes transcription of muscle-specific target genes and plays a role in muscle differentiation. This Takifugu rubripes (Japanese pufferfish) protein is Myoblast determination protein 1 homolog (myod).